A 222-amino-acid polypeptide reads, in one-letter code: Capsular polysaccharide type 5 biosynthesis protein cap5A (222 aa).

The next 2 membrane-spanning stretches (helical) occupy residues 20-40 and 172-192; these read ILII…FFVL and VVNL…YIFF.

The protein belongs to the CpsC/CapA family.

Its subcellular location is the cell membrane. In terms of biological role, required for the biosynthesis of type 5 capsular polysaccharide (Cap5/CP5). Might act as the chain-length regulator. The polypeptide is Capsular polysaccharide type 5 biosynthesis protein cap5A (cap5A) (Staphylococcus aureus (strain Newman)).